Here is a 283-residue protein sequence, read N- to C-terminus: Bifunctional protein FolD (283 aa).

Residues Gly-163–Ser-165, Ser-188, and Ile-229 contribute to the NADP(+) site.

It belongs to the tetrahydrofolate dehydrogenase/cyclohydrolase family. As to quaternary structure, homodimer.

The enzyme catalyses (6R)-5,10-methylene-5,6,7,8-tetrahydrofolate + NADP(+) = (6R)-5,10-methenyltetrahydrofolate + NADPH. It catalyses the reaction (6R)-5,10-methenyltetrahydrofolate + H2O = (6R)-10-formyltetrahydrofolate + H(+). It functions in the pathway one-carbon metabolism; tetrahydrofolate interconversion. In terms of biological role, catalyzes the oxidation of 5,10-methylenetetrahydrofolate to 5,10-methenyltetrahydrofolate and then the hydrolysis of 5,10-methenyltetrahydrofolate to 10-formyltetrahydrofolate. This Latilactobacillus sakei subsp. sakei (strain 23K) (Lactobacillus sakei subsp. sakei) protein is Bifunctional protein FolD.